Reading from the N-terminus, the 122-residue chain is uncharacterized protein (122 aa).

Residues 9–25 form a helical membrane-spanning segment; it reads AFPSPVFLGGVFFVFFF.

The protein resides in the cytoplasm. It localises to the nucleus. Its subcellular location is the membrane. This is an uncharacterized protein from Saccharomyces cerevisiae (strain ATCC 204508 / S288c) (Baker's yeast).